We begin with the raw amino-acid sequence, 622 residues long: MSGPVDTAKSITKKRKRKHGGGARAATETDDAITRPAIENGAVNDSPEKEEDTKKSEKNGKDKSAKKRKVSHASSDEGDESQEEQGAPAQADGDSDDNKDDGNDQSEAENGDNGDKKDTESTDLPSAGTLSLPTVEGEPQKFTELGLSEKTLKAINDMGFETMTEIQRRTIPPLLAGRDVLGAAKTGSGKTLSFLIPAVEMLSALRFKPRNGTGVIVVSPTRELALQIFGVARELCQYHSQTYGIVIGGANRRAEAEKLMKGVNLLIATPGRLLDHLQNTQGFVFKNLKTLVIDEADRILEVGFEDEMRQIVKILPSEERQTMLFSATQTTKVEDLARISLRPGPLYINVDHRKEHSTVEGLEQGYVICEADKRFLLLFSFLKRNLKKKIIVFFSSCNCVKYHAELLNYIDLPVLELHGKQKQQKRTNTFFEFCNAKQGTLICTDVAARGLDIPAVDWIIQFDPPDDPRDYIHRVGRTARGTNAKGRSLMFLQPSEVGFLKHLKEARVPVVEFEFPANKIVNVQSQLEKLIGQNYYLNKSAKEGYRSYLQAYASHSLRSVFDVHKLDLVKVAKGFGFSTPPRIDIQLGASLSRDKKQQQQGRRSYGSQPHSKGLKFKRKHDD.

Residues 1–143 (MSGPVDTAKS…TVEGEPQKFT (143 aa)) form a disordered region. Over residues 11–21 (ITKKRKRKHGG) the composition is skewed to basic residues. Over residues 51 to 63 (EDTKKSEKNGKDK) the composition is skewed to basic and acidic residues. Residues 93 to 112 (GDSDDNKDDGNDQSEAENGD) are compositionally biased toward acidic residues. Polar residues predominate over residues 122 to 132 (TDLPSAGTLSL). Positions 140–168 (QKFTELGLSEKTLKAINDMGFETMTEIQR) match the Q motif motif. Residues 171–347 (IPPLLAGRDV…RISLRPGPLY (177 aa)) form the Helicase ATP-binding domain. ATP is bound at residue 184–191 (AKTGSGKT). The DEAD box motif lies at 294–297 (DEAD). The Helicase C-terminal domain occupies 361–531 (GLEQGYVICE…NVQSQLEKLI (171 aa)). The Bipartite nuclear localization signal motif lies at 373–389 (KRFLLLFSFLKRNLKKK). Positions 588–622 (GASLSRDKKQQQQGRRSYGSQPHSKGLKFKRKHDD) are disordered. The span at 598 to 608 (QQQGRRSYGSQ) shows a compositional bias: low complexity. Positions 612–622 (KGLKFKRKHDD) are enriched in basic residues.

It belongs to the DEAD box helicase family. DDX18/HAS1 subfamily. In terms of assembly, associates in the nucleolus with the 60S and pre-60S ribosomal subunits.

Its subcellular location is the nucleus. The protein resides in the nucleolus. The enzyme catalyses ATP + H2O = ADP + phosphate + H(+). ATP-dependent RNA helicase involved in 40S ribosomal subunit biogenesis. Required for the processing and cleavage of 35S pre-rRNA at sites A0, A1, and A2, leading to mature 18S rRNA. The chain is ATP-dependent RNA helicase has1 (has1) from Aspergillus fumigatus (strain ATCC MYA-4609 / CBS 101355 / FGSC A1100 / Af293) (Neosartorya fumigata).